A 200-amino-acid polypeptide reads, in one-letter code: Glycerol-3-phosphate acyltransferase (200 aa).

Transmembrane regions (helical) follow at residues Met1 to Gly21, Gly53 to Ala73, Trp81 to Gly101, Met114 to Ile134, and Ile139 to Gly159.

This sequence belongs to the PlsY family. As to quaternary structure, probably interacts with PlsX.

The protein localises to the cell inner membrane. The enzyme catalyses an acyl phosphate + sn-glycerol 3-phosphate = a 1-acyl-sn-glycero-3-phosphate + phosphate. The protein operates within lipid metabolism; phospholipid metabolism. In terms of biological role, catalyzes the transfer of an acyl group from acyl-phosphate (acyl-PO(4)) to glycerol-3-phosphate (G3P) to form lysophosphatidic acid (LPA). This enzyme utilizes acyl-phosphate as fatty acyl donor, but not acyl-CoA or acyl-ACP. This is Glycerol-3-phosphate acyltransferase from Synechococcus sp. (strain CC9902).